The sequence spans 117 residues: Immunoglobulin heavy variable 3-21 (117 aa).

The signal sequence occupies residues 1–19 (MELGLRWVFLVAILEGVQC). Residues 20 to 44 (EVQLVESGGGLVKPGGSLRLSCAAS) form a framework-1 region. Positions 20 to 117 (EVQLVESGGG…EDTAVYYCAR (98 aa)) constitute an Ig-like domain. Cys41 and Cys115 are disulfide-bonded. The segment at 45–52 (GFTFSSYS) is complementarity-determining-1. Positions 53 to 69 (MNWVRQAPGKGLEWVSS) are framework-2. Residues 70 to 77 (ISSSSSYI) are complementarity-determining-2. Positions 78 to 115 (YYADSVKGRFTISRDNAKNSLYLQMNSLRAEDTAVYYC) are framework-3. The tract at residues 116 to 117 (AR) is complementarity-determining-3.

As to quaternary structure, immunoglobulins are composed of two identical heavy chains and two identical light chains; disulfide-linked.

It is found in the secreted. Its subcellular location is the cell membrane. In terms of biological role, v region of the variable domain of immunoglobulin heavy chains that participates in the antigen recognition. Immunoglobulins, also known as antibodies, are membrane-bound or secreted glycoproteins produced by B lymphocytes. In the recognition phase of humoral immunity, the membrane-bound immunoglobulins serve as receptors which, upon binding of a specific antigen, trigger the clonal expansion and differentiation of B lymphocytes into immunoglobulins-secreting plasma cells. Secreted immunoglobulins mediate the effector phase of humoral immunity, which results in the elimination of bound antigens. The antigen binding site is formed by the variable domain of one heavy chain, together with that of its associated light chain. Thus, each immunoglobulin has two antigen binding sites with remarkable affinity for a particular antigen. The variable domains are assembled by a process called V-(D)-J rearrangement and can then be subjected to somatic hypermutations which, after exposure to antigen and selection, allow affinity maturation for a particular antigen. This chain is Immunoglobulin heavy variable 3-21, found in Homo sapiens (Human).